We begin with the raw amino-acid sequence, 180 residues long: MALICIGSVCFSLFHIGVIILLIINYFSSHIKKIFPSFFKNPNKEEIDKHIGNILEAKRKNKQLEQSIYIELKNTGSLNQVFSSTQNSSIVIKFGAVWCKPCNKIKEYFKNQLNYYYVTLVDIDVDIHPKLNDQHNIKALPTFEFYFNLNNEWVLVHTVEGANQNDIEKAFQKYCLEKAK.

The Cytoplasmic segment spans residues Met1–Leu3. The helical; Signal-anchor for type II membrane protein transmembrane segment at Ile4 to Ile24 threads the bilayer. The Lumenal segment spans residues Asn25–Lys180. In terms of domain architecture, Thioredoxin spans Ser29 to Leu176. Active-site nucleophile residues include Cys99 and Cys102. An intrachain disulfide couples Cys99 to Cys102.

This sequence belongs to the thioredoxin family. In terms of processing, the disulfide bond between Cys-99 and Cys-102 acts as a redox-active center and is reduced by thioredoxin reductase TRXR.

It is found in the endoplasmic reticulum membrane. Functionally, participates in various redox reactions through the reversible oxidation of its active center dithiol to a disulfide and catalyzes dithiol-disulfide exchange reactions. The protein is Thioredoxin 3 of Plasmodium falciparum (isolate 3D7).